The following is a 1277-amino-acid chain: MTLGNSYDAFNHDPWMDVVGFEDPNQVTNRDISRIVLYSYMFLNTAKGCLVEYATFRQYMRELPKNAPQKLNFREMRQGLIALGRHCVGSRFETDLYESATSELMANHSVQTGRNIYGVDSFSLTSVSGTTATLLQERASERWIQWLGLESDYHCSFSSTRNAEDVVAGEAASSDHHQKISRVTRKRPREPKSTNDILVAGQKLFGSSFEFRDLHQLRLCYEIYMADTPSVAVQAPPGYGKTELFHLPLIALASKGDVKYVSFLFVPYTVLLANCMIRLGRCGCLNVAPVRNFIEEGYDGVTDLYVGIYDDLASTNFTDRIAAWENIVECTFRTNNVKLGYLIVDEFHNFETEVYRQSQFGGITNLDFDAFEKAIFLSGTAPEAVADAALQRIGLTGLAKKSMDINELKRSEDLSRGLSSYPTRMFNLIKEKSEVPLGHVHKIRKKVESQPEEALKLLLALFESEPESKAIVVASTTNEVEELACSWRKYFRVVWIHGKLDAAEKVSRTKEFVTDGNMRVLIGTKLVTEGIDIKQLMMVIMLDNRLNIIELIQGVGRLRDGGLCYLLSRKNSWAARNRKGELPPIKEGCITEQVREFYGLESKKGKKGQHVGCCGSRTDLSADTVELIERMDRLAEKQATASMSIVALPSNFQESNSSDRYRKYCSSDEDSNTCIHGSANASTNASTNAITTASTNVRTNATTNASTNATTNASTNATTNSSTNATTTASTNVRTSATTTASINVRTSATTTESTNSSTNATTTASINVRTSATTTKSINSSTNATITESTNSNTNATTTESTNSKTSATTTASTNSNTSATTTESTNSKTSATTTASTNSNTSATTTESTNSNTSATTTASTNSSTNATTTESTNASAKEDANKDGNAEDNRFHPVTDINKESYKRKGSQMVLLERKKLKAQFPNTSENMNVLQFLGFRSDEIKHLFLYGIDIYFCPEGVFTQYGLCKGCQKMFELCVCWAGQKVSYRRMAWEALAVERMLRNDEEYKEYLEDIEPYHGDPVGYLKYFSVKRREIYSQIQRNYAWYLAITRRRETISVLDSTRGKQGSQVFRMSGRQIKELYYKVWSNLRESKTEVLQYFLNWDEKKCQEEWEAKDDTVFVEALEKVGVFQRLRSMTSAGLQGPQYVKLQFSRHHRQLRSRYELSLGMHLRDQIALGVTPSKVPHWTAFLSMLIGLFYNKTFRQKLEYLLEQISEVWLLPHWLDLANVEVLAADNTKVPLYMLMVAVHKELDSDDVPDGRFDIILLCRDSSREVGE.

Residues 222–399 (EIYMADTPSV…LQRIGLTGLA (178 aa)) form the Helicase ATP-binding domain. 235-242 (APPGYGKT) serves as a coordination point for ATP. Residues 345 to 348 (DEFH) carry the DEAH box motif. Positions 454–605 (ALKLLLALFE…EFYGLESKKG (152 aa)) constitute a Helicase C-terminal domain. 2 disordered regions span residues 696–763 (NVRT…NATT) and 775–895 (TTKS…NRFH). The span at 775–878 (TTKSINSSTN…ATTTESTNAS (104 aa)) shows a compositional bias: low complexity. Positions 879 to 895 (AKEDANKDGNAEDNRFH) are enriched in basic and acidic residues.

The protein belongs to the helicase family. Yeast subtelomeric Y' repeat subfamily.

In terms of biological role, catalyzes DNA unwinding and is involved in telomerase-independent telomere maintenance. The sequence is that of Y' element ATP-dependent helicase YEL077C from Saccharomyces cerevisiae (strain ATCC 204508 / S288c) (Baker's yeast).